The primary structure comprises 246 residues: MNNNTTAPTYTLRGLQLIGWRDMQHALDYLFADGQLKQGTLVAINAEKMLTIEDNAEVRELINAAEFKYADGISVVRSVRKKYPQAQVSRVAGADLWEELMARAGKEGTPVFLVGGKPEVLAQTEAKLRNQWNVNIVGSQDGYFKPEQRQALFERIHASGAQIVTVAMGSPKQEIFMRDCRLVHPDALYMGVGGTYDVFTGHVKRAPKIWQTLGLEWLYRLLSQPSRIKRQLRLLRYLRWHYTGNL.

It belongs to the glycosyltransferase 26 family.

The enzyme catalyses UDP-N-acetyl-alpha-D-mannosaminouronate + N-acetyl-alpha-D-glucosaminyl-di-trans,octa-cis-undecaprenyl diphosphate = beta-D-ManNAcA-(1-&gt;4)-alpha-D-GlcNAc-di-trans,octa-cis-undecaprenyl diphosphate + UDP + H(+). The protein operates within bacterial outer membrane biogenesis; enterobacterial common antigen biosynthesis. In terms of biological role, catalyzes the synthesis of Und-PP-GlcNAc-ManNAcA (Lipid II), the second lipid-linked intermediate involved in enterobacterial common antigen (ECA) synthesis. This is UDP-N-acetyl-D-mannosaminuronic acid transferase from Escherichia coli O6:K15:H31 (strain 536 / UPEC).